Here is a 115-residue protein sequence, read N- to C-terminus: Autophagy-related protein 8i (115 aa).

Residue G115 is the site of Phosphatidylethanolamine amidated glycine attachment.

Belongs to the ATG8 family. In terms of assembly, interacts with ATG4. Interacts with NBR1. Gly-115 forms then a thioester bond with the 'Cys-558' of ATG7 (E1-like activating enzyme) before being transferred to the 'Cys-258' of ATG3 (the specific E2 conjugating enzyme), in order to be finally amidated with phosphatidylethanolamine. This lipid modification anchors ATG8 to autophagosomes. Constitutively expressed.

The protein resides in the cytoplasmic vesicle. Its subcellular location is the autophagosome membrane. It is found in the vacuole membrane. It localises to the cytoplasm. The protein localises to the cytoskeleton. Its function is as follows. Ubiquitin-like modifier involved in autophagosomes formation. May mediate the delivery of the autophagosomes to the vacuole via the microtubule cytoskeleton. The protein is Autophagy-related protein 8i (ATG8I) of Arabidopsis thaliana (Mouse-ear cress).